The following is a 701-amino-acid chain: DNA-directed RNA polymerase subunit beta' (701 aa).

Positions 76, 78, 94, and 97 each coordinate Zn(2+). Residues aspartate 511, aspartate 513, and aspartate 515 each contribute to the Mg(2+) site.

The protein belongs to the RNA polymerase beta' chain family. RpoC1 subfamily. In terms of assembly, in plastids the minimal PEP RNA polymerase catalytic core is composed of four subunits: alpha, beta, beta', and beta''. When a (nuclear-encoded) sigma factor is associated with the core the holoenzyme is formed, which can initiate transcription. Requires Mg(2+) as cofactor. Zn(2+) is required as a cofactor.

The protein resides in the plastid. It localises to the chloroplast. The enzyme catalyses RNA(n) + a ribonucleoside 5'-triphosphate = RNA(n+1) + diphosphate. Its function is as follows. DNA-dependent RNA polymerase catalyzes the transcription of DNA into RNA using the four ribonucleoside triphosphates as substrates. This chain is DNA-directed RNA polymerase subunit beta', found in Pelargonium hortorum (Common geranium).